Here is a 292-residue protein sequence, read N- to C-terminus: Beta-lactamase-like protein 2 homolog (292 aa).

Zn(2+) contacts are provided by histidine 76, histidine 78, aspartate 80, histidine 81, histidine 145, aspartate 163, and histidine 198.

It belongs to the metallo-beta-lactamase superfamily. Glyoxalase II family.

In Drosophila melanogaster (Fruit fly), this protein is Beta-lactamase-like protein 2 homolog.